The primary structure comprises 536 residues: MLRRDFLKYSVALGVASALPLWSRAAFAAERPALPIPDLLTADASNRMQLIVKAGQSTFAGKNATTWGYNGNLLGPAVQLHKGKSVTVDIHNQLAEDTTLHWHGLEIPGIVDGGPQGIIPAGGTRTVTFTPEQRAATCWIHPHKHGKTGRQVAMGLAGLVLIEDDEIRKLRLPKQWGIDDVPVIIQDKRFSADGQIDYQLDIMTAAVGWFGDTLLTNGAIYPQHSAPKGWLRLRLLNGCNARSLNIAASDNRPLYVIASDGGLLAEPVKVTELPLLMGERFEVLVDISDGKAFDLVTLPVSQMGMAIAPFDKPHPVMRIQPLRITASGTLPDTLTTMPALPSLEGLTVRNLKLSMDPRLDMMGMQMLMKKYGAQAMSGMDHDSMNAHMQGGNMGHGEMDHGNMDHSGMNHGAMGNMNHGGKFDFHNANFINGQVFDMNKPMFAAQKGRHERWVISGVGDMMLHPFHIHGTQFRILSENGKAPAAHRTGWKDTVRVEGGISEVLVKFDHDAPKEHAYMAHCHLLEHEDTGMMLGFTV.

Positions 1-28 (MLRRDFLKYSVALGVASALPLWSRAAFA) form a signal peptide, tat-type signal. Plastocyanin-like domains are found at residues 53–165 (KAGQ…IEDD), 229–295 (GWLR…AFDL), and 424–536 (FHNA…GFTV). Cu cation-binding residues include histidine 101, histidine 103, histidine 141, and histidine 143. Cu cation contacts are provided by histidine 463, histidine 466, histidine 468, histidine 519, cysteine 520, histidine 521, and histidine 525.

The protein belongs to the multicopper oxidase family. Monomer. Cu cation is required as a cofactor. Post-translationally, predicted to be exported by the Tat system. The position of the signal peptide cleavage has not been experimentally proven.

The protein resides in the periplasm. The catalysed reaction is 4 Cu(+) + O2 + 4 H(+) = 4 Cu(2+) + 2 H2O. Functionally, multicopper oxidase involved in copper homeostasis and copper tolerance under both aerobic and anaerobic conditions. Is responsible for the oxidation of Cu(+) to the less harmful Cu(2+) in the periplasm, thereby preventing Cu(+) from entering the cytoplasm. In Salmonella typhimurium (strain LT2 / SGSC1412 / ATCC 700720), this protein is Multicopper oxidase CueO (cueO).